A 314-amino-acid polypeptide reads, in one-letter code: Ornithine carbamoyltransferase (314 aa).

Residues 61-64 (STRT), Gln88, Arg112, and 139-142 (HPCQ) contribute to the carbamoyl phosphate site. Residues Asn170, Asp234, and 238–239 (SM) contribute to the L-ornithine site. Carbamoyl phosphate is bound by residues 274 to 275 (CL) and Arg302.

Belongs to the aspartate/ornithine carbamoyltransferase superfamily. OTCase family.

The protein resides in the cytoplasm. The enzyme catalyses carbamoyl phosphate + L-ornithine = L-citrulline + phosphate + H(+). It functions in the pathway amino-acid biosynthesis; L-arginine biosynthesis; L-arginine from L-ornithine and carbamoyl phosphate: step 1/3. Reversibly catalyzes the transfer of the carbamoyl group from carbamoyl phosphate (CP) to the N(epsilon) atom of ornithine (ORN) to produce L-citrulline. In Anoxybacillus flavithermus (strain DSM 21510 / WK1), this protein is Ornithine carbamoyltransferase.